The chain runs to 382 residues: 2-epi-valiolone synthase (382 aa).

Residues 92–95 (EKSK), 124–128 (GVVVD), 148–149 (TT), Lys-161, Lys-170, and 188–191 (HLRT) each bind NAD(+). Residues Glu-203, His-266, and His-283 each coordinate Zn(2+).

This sequence belongs to the sugar phosphate cyclases superfamily. EVS family. It depends on NAD(+) as a cofactor. Co(2+) is required as a cofactor. Requires Zn(2+) as cofactor.

It carries out the reaction D-sedoheptulose 7-phosphate = 2-epi-valiolone + phosphate. In terms of biological role, catalyzes the conversion of sedoheptulose 7-phosphate to 2-epi-valiolone, which may serve as an alternative precursor for aminocyclitol biosynthesis. This chain is 2-epi-valiolone synthase, found in Actinosynnema mirum (strain ATCC 29888 / DSM 43827 / JCM 3225 / NBRC 14064 / NCIMB 13271 / NRRL B-12336 / IMRU 3971 / 101).